The primary structure comprises 916 residues: Nonsense-mediated mRNA decay factor SMG8 (916 aa).

The tract at residues 566–626 (LENSNRTPDT…KNYASQGDAD (61 aa)) is disordered. The span at 589–604 (LSGSQKSQDSASNLTF) shows a compositional bias: polar residues.

The protein belongs to the SMG8 family.

Functionally, involved in nonsense-mediated decay (NMD) of mRNAs containing premature stop codons. Probable component of kinase complex containing SMG1 and recruited to stalled ribosomes. This is Nonsense-mediated mRNA decay factor SMG8 from Aedes aegypti (Yellowfever mosquito).